Consider the following 346-residue polypeptide: c-di-GMP synthase (346 aa).

The protein belongs to the CD-NTase family.

It catalyses the reaction 2 GTP = 3',3'-c-di-GMP + 2 diphosphate. In terms of biological role, cyclic nucleotide synthase (second messenger synthase) of a CBASS antivirus system. CBASS (cyclic oligonucleotide-based antiphage signaling system) provides immunity against bacteriophage. The CD-NTase protein synthesizes cyclic nucleotides in response to infection; these serve as specific second messenger signals. The signals activate a diverse range of effectors, leading to bacterial cell death and thus abortive phage infection. A type I-D(GG) CBASS system. Functionally, cyclic dinucleotide synthase that catalyzes the synthesis of c-di-GMP, has no activity with other NTP substrates. The chain is c-di-GMP synthase from Lachnospiraceae bacterium (strain RUG226).